Reading from the N-terminus, the 439-residue chain is Homogentisate 1,2-dioxygenase (439 aa).

Catalysis depends on His-293, which acts as the Proton acceptor. Positions 336 and 342 each coordinate Fe cation. Residues Tyr-351 and His-372 each coordinate homogentisate. Position 372 (His-372) interacts with Fe cation.

This sequence belongs to the homogentisate dioxygenase family. In terms of assembly, hexamer; dimer of trimers. The cofactor is Fe cation.

The catalysed reaction is homogentisate + O2 = 4-maleylacetoacetate + H(+). Its pathway is amino-acid degradation; L-phenylalanine degradation; acetoacetate and fumarate from L-phenylalanine: step 4/6. In terms of biological role, involved in the catabolism of homogentisate (2,5-dihydroxyphenylacetate or 2,5-OH-PhAc), a central intermediate in the degradation of phenylalanine and tyrosine. Catalyzes the oxidative ring cleavage of the aromatic ring of homogentisate to yield maleylacetoacetate. The polypeptide is Homogentisate 1,2-dioxygenase (Cupriavidus necator (strain ATCC 17699 / DSM 428 / KCTC 22496 / NCIMB 10442 / H16 / Stanier 337) (Ralstonia eutropha)).